A 1383-amino-acid polypeptide reads, in one-letter code: DNA-directed RNA polymerase subunit beta (1383 aa).

This sequence belongs to the RNA polymerase beta chain family. As to quaternary structure, the RNAP catalytic core consists of 2 alpha, 1 beta, 1 beta' and 1 omega subunit. When a sigma factor is associated with the core the holoenzyme is formed, which can initiate transcription.

The enzyme catalyses RNA(n) + a ribonucleoside 5'-triphosphate = RNA(n+1) + diphosphate. DNA-dependent RNA polymerase catalyzes the transcription of DNA into RNA using the four ribonucleoside triphosphates as substrates. In Bartonella bacilliformis (strain ATCC 35685 / KC583 / Herrer 020/F12,63), this protein is DNA-directed RNA polymerase subunit beta.